The following is a 995-amino-acid chain: Meckelin (995 aa).

Residues Met1 to Ala36 form the signal peptide. A cysteine-rich region spans residues Gln37–Gly280. Over Gln37–Glu519 the chain is Extracellular. 11 disulfide bridges follow: Cys49–Cys62, Cys65–Cys78, Cys80–Cys97, Cys100–Cys114, Cys117–Cys127, Cys129–Cys150, Cys153–Cys170, Cys173–Cys184, Cys186–Cys197, Cys237–Cys246, and Cys253–Cys268. Asn141 carries N-linked (GlcNAc...) asparagine glycosylation. Residue Asn179 is glycosylated (N-linked (GlcNAc...) asparagine). Asn242 carries an N-linked (GlcNAc...) asparagine glycan. Residue Asn318 is glycosylated (N-linked (GlcNAc...) asparagine). Residues Cys357 and Cys378 are joined by a disulfide bond. The chain crosses the membrane as a helical span at residues Ala520 to Arg548. At Arg549–Gln558 the chain is on the cytoplasmic side. Residues Thr559–Phe590 form a helical membrane-spanning segment. At Lys591–Pro603 the chain is on the extracellular side. The helical transmembrane segment at Ile604–Gln631 threads the bilayer. At Ile632–Thr670 the chain is on the cytoplasmic side. Residues Tyr671–Glu679 constitute an intramembrane region (helical). Residues Tyr671 to Val701 form a discontinuously helical membrane-spanning segment. Residues Ile680–Ser688 lie within the membrane without spanning it. Positions Leu689–Val701 form an intramembrane region, helical. Residues Val702–Leu731 are Extracellular-facing. Residues Arg732–Arg757 constitute an intramembrane region (helical). The chain crosses the membrane as a discontinuously helical span at residues Arg732–Ser771. An intramembrane segment occupies Phe758–Lys762. Positions Ile763–Ser771 form an intramembrane region, helical. At Met772–Ser926 the chain is on the cytoplasmic side. The stretch at Gly828–Ser917 forms a coiled coil. An intramembrane region (helical) is located at residues Phe927–Ser929. Residues Phe927–Leu952 form a discontinuously helical membrane-spanning segment. An intramembrane segment occupies Val930 to Glu936. Positions Ala937–Leu952 form an intramembrane region, helical. Residues Ala953–Phe957 are Extracellular-facing. The helical transmembrane segment at Ile958 to Ser985 threads the bilayer. Residues Lys986 to Ile995 are Cytoplasmic-facing.

As to quaternary structure, homodimer. Part of the tectonic-like complex (also named B9 complex). Interacts with DNAJB9, DNAJC10 and mutated SFTPC. Interacts with SYNE2 during the early establishment of cell polarity. Interacts (via C-terminus) with FLNA. Interacts with TMEM218. Interacts with WNT5A. Interacts with ROR2. In terms of tissue distribution, widely expressed in adult and fetal tissues. Expressed at higher level in spinal cord.

It localises to the cell membrane. The protein localises to the endoplasmic reticulum membrane. The protein resides in the cell projection. Its subcellular location is the cilium. It is found in the cytoplasm. It localises to the cytoskeleton. The protein localises to the cilium basal body. In terms of biological role, required for ciliary structure and function. Part of the tectonic-like complex which is required for tissue-specific ciliogenesis and may regulate ciliary membrane composition. Involved in centrosome migration to the apical cell surface during early ciliogenesis. Involved in the regulation of cilia length and appropriate number through the control of centrosome duplication. Is a key regulator of stereociliary bundle orientation. Required for epithelial cell branching morphology. Essential for endoplasmic reticulum-associated degradation (ERAD) of surfactant protein C (SFTPC). Involved in the negative regulation of canonical Wnt signaling, and activation of the non-canonical cascade stimulated by WNT5A. In non-canonical Wnt signaling, it may act as ROR2 coreceptor. In Homo sapiens (Human), this protein is Meckelin (TMEM67).